The following is a 164-amino-acid chain: Peptide deformylase (164 aa).

Fe cation-binding residues include C87 and H129. Residue E130 is part of the active site. Residue H133 participates in Fe cation binding.

Belongs to the polypeptide deformylase family. Fe(2+) is required as a cofactor.

It catalyses the reaction N-terminal N-formyl-L-methionyl-[peptide] + H2O = N-terminal L-methionyl-[peptide] + formate. In terms of biological role, removes the formyl group from the N-terminal Met of newly synthesized proteins. Requires at least a dipeptide for an efficient rate of reaction. N-terminal L-methionine is a prerequisite for activity but the enzyme has broad specificity at other positions. The protein is Peptide deformylase of Thermotoga sp. (strain RQ2).